Consider the following 158-residue polypeptide: Ribosome maturation factor RimP (158 aa).

The protein belongs to the RimP family.

Its subcellular location is the cytoplasm. Its function is as follows. Required for maturation of 30S ribosomal subunits. The chain is Ribosome maturation factor RimP from Lactobacillus helveticus (strain DPC 4571).